We begin with the raw amino-acid sequence, 96 residues long: uncharacterized protein (96 aa).

A helical membrane pass occupies residues 1-21 (MSDFEIIVGISSLLQVIILNI).

It localises to the membrane. This is an uncharacterized protein from Saccharomyces cerevisiae (strain ATCC 204508 / S288c) (Baker's yeast).